A 237-amino-acid chain; its full sequence is Phosphoribosylaminoimidazole-succinocarboxamide synthase (237 aa).

This sequence belongs to the SAICAR synthetase family.

It carries out the reaction 5-amino-1-(5-phospho-D-ribosyl)imidazole-4-carboxylate + L-aspartate + ATP = (2S)-2-[5-amino-1-(5-phospho-beta-D-ribosyl)imidazole-4-carboxamido]succinate + ADP + phosphate + 2 H(+). It functions in the pathway purine metabolism; IMP biosynthesis via de novo pathway; 5-amino-1-(5-phospho-D-ribosyl)imidazole-4-carboxamide from 5-amino-1-(5-phospho-D-ribosyl)imidazole-4-carboxylate: step 1/2. This Deinococcus deserti (strain DSM 17065 / CIP 109153 / LMG 22923 / VCD115) protein is Phosphoribosylaminoimidazole-succinocarboxamide synthase.